Reading from the N-terminus, the 1427-residue chain is Lysophospholipase NTE1 (1427 aa).

Residues 1–60 (MDSLHVSSTSVLVDVVEAVETATSLVVDTAEAVATEQATPTAVISNALARSAYAAHTSLS) are Cytoplasmic-facing. Residues 61 to 81 (YLAWAFGLWFLRLIGWVCYGI) traverse the membrane as a helical segment. Residues 82-96 (PTYVLGLLGRTINIS) lie on the Lumenal side of the membrane. The helical transmembrane segment at 97 to 117 (LQFSSLLLILIALVTVVVAVV) threads the bilayer. The Cytoplasmic portion of the chain corresponds to 118 to 1427 (RYKYLTVYSR…KRTIARRNSI (1310 aa)). A compositionally biased stretch (polar residues) spans 281 to 296 (PMTSASDVPNMSLSSD). Positions 281–315 (PMTSASDVPNMSLSSDGSDDLQKGEPQFGEPRLSE) are disordered. A nucleoside 3',5'-cyclic phosphate contacts are provided by residues 615–735 (LMAA…LTKV) and 731–870 (SLTK…VASR). Positions 787–807 (GIVGGESGDAKDGKSHRKNLT) are disordered. In terms of domain architecture, PNPLA spans 1124 to 1288 (LVLGGGGARG…VDNLPVSEMK (165 aa)). The GXGXXG signature appears at 1128–1133 (GGGARG). Residues 1155-1159 (GTSIG) carry the GXSXG motif. The active-site Nucleophile is the serine 1157. The active-site Proton acceptor is the aspartate 1275. Residues 1275 to 1277 (DGG) carry the DGA/G motif.

This sequence belongs to the NTE family.

Its subcellular location is the endoplasmic reticulum membrane. It catalyses the reaction a 1-acyl-sn-glycero-3-phosphocholine + H2O = sn-glycerol 3-phosphocholine + a fatty acid + H(+). With respect to regulation, inhibited by organophosphorus esters. Functionally, intracellular phospholipase B that catalyzes the double deacylation of phosphatidylcholine (PC) to glycerophosphocholine (GroPCho). Plays an important role in membrane lipid homeostasis. Responsible for the rapid PC turnover in response to inositol, elevated temperatures, or when choline is present in the growth medium. The sequence is that of Lysophospholipase NTE1 (NTE1) from Yarrowia lipolytica (strain CLIB 122 / E 150) (Yeast).